We begin with the raw amino-acid sequence, 178 residues long: Disulfide bond formation protein B (178 aa).

Topologically, residues 1–16 (MTIFSSLNQFSKGHVS) are cytoplasmic. A helical membrane pass occupies residues 17 to 33 (WLLLLLFIIFFEACALY). The Periplasmic portion of the chain corresponds to 34–51 (FQHVMMLAPCVMCIYERV). An intrachain disulfide couples Cys-43 to Cys-46. A helical transmembrane segment spans residues 52–67 (AMMGIGGAAIIGLIAP). Residues 68–74 (NNALFRW) lie on the Cytoplasmic side of the membrane. The helical transmembrane segment at 75-92 (LGLIGWGLSSYKGLMLAM) threads the bilayer. Residues 93-147 (QHVDYQFNPSPFATCDLFVTFPSWAPLNQWVPWMFEAYGDCSKIVWQFFDLSMPQ) are Periplasmic-facing. A disulfide bridge links Cys-107 with Cys-133. Residues 148-166 (WLVVIFAGNLVALALIVIA) form a helical membrane-spanning segment. At 167 to 178 (QFFPVKRKNPIR) the chain is on the cytoplasmic side.

It belongs to the DsbB family.

It is found in the cell inner membrane. Functionally, required for disulfide bond formation in some periplasmic proteins. Acts by oxidizing the DsbA protein. This Vibrio parahaemolyticus serotype O3:K6 (strain RIMD 2210633) protein is Disulfide bond formation protein B.